Here is a 265-residue protein sequence, read N- to C-terminus: Undecaprenyl-diphosphatase (265 aa).

The next 7 membrane-spanning stretches (helical) occupy residues 41 to 61 (IAYT…LIYF), 75 to 95 (LKFL…LYVI), 104 to 124 (YNPS…GIYI), 137 to 157 (LSTK…LPGV), 180 to 200 (YSYL…LLFT), 215 to 235 (GIAL…GFLL), and 244 to 264 (YLID…GLII).

Belongs to the UppP family.

It is found in the cell membrane. It catalyses the reaction di-trans,octa-cis-undecaprenyl diphosphate + H2O = di-trans,octa-cis-undecaprenyl phosphate + phosphate + H(+). Its function is as follows. Catalyzes the dephosphorylation of undecaprenyl diphosphate (UPP). This Saccharolobus islandicus (strain Y.G.57.14 / Yellowstone #1) (Sulfolobus islandicus) protein is Undecaprenyl-diphosphatase.